Consider the following 118-residue polypeptide: uncharacterized protein (118 aa).

Residues 1 to 27 form the signal peptide; that stretch reads MPIKEPDVWALIWSWLQTNLSSSSAQS.

This is an uncharacterized protein from Haemophilus influenzae (strain ATCC 51907 / DSM 11121 / KW20 / Rd).